Here is a 276-residue protein sequence, read N- to C-terminus: Shikimate dehydrogenase (NADP(+)) (276 aa).

Shikimate contacts are provided by residues serine 15–serine 17 and threonine 63. Lysine 67 serves as the catalytic Proton acceptor. Residue aspartate 79 coordinates NADP(+). Residues asparagine 88 and aspartate 103 each coordinate shikimate. NADP(+)-binding positions include glycine 130–alanine 134, asparagine 154–arginine 159, and isoleucine 217. Position 219 (tyrosine 219) interacts with shikimate. Glycine 240 is an NADP(+) binding site.

It belongs to the shikimate dehydrogenase family. Homodimer.

It carries out the reaction shikimate + NADP(+) = 3-dehydroshikimate + NADPH + H(+). Its pathway is metabolic intermediate biosynthesis; chorismate biosynthesis; chorismate from D-erythrose 4-phosphate and phosphoenolpyruvate: step 4/7. In terms of biological role, involved in the biosynthesis of the chorismate, which leads to the biosynthesis of aromatic amino acids. Catalyzes the reversible NADPH linked reduction of 3-dehydroshikimate (DHSA) to yield shikimate (SA). The polypeptide is Shikimate dehydrogenase (NADP(+)) (Oceanobacillus iheyensis (strain DSM 14371 / CIP 107618 / JCM 11309 / KCTC 3954 / HTE831)).